A 143-amino-acid polypeptide reads, in one-letter code: UPF0763 protein HH_0976 (143 aa).

It belongs to the UPF0763 family.

This Helicobacter hepaticus (strain ATCC 51449 / 3B1) protein is UPF0763 protein HH_0976.